A 954-amino-acid chain; its full sequence is Regulatory protein FlaEY (954 aa).

Its function is as follows. Functions in trans to modulate the level of transcription of the flagellin genes and several genes encoding chemotaxis functions. It is itself temporally controlled. This chain is Regulatory protein FlaEY (flaEY), found in Caulobacter vibrioides (strain ATCC 19089 / CIP 103742 / CB 15) (Caulobacter crescentus).